The chain runs to 42 residues: Small, acid-soluble spore protein L (42 aa).

The disordered stretch occupies residues Met1 to Arg42. Positions Gly21–Lys36 are enriched in basic and acidic residues.

It localises to the spore core. The sequence is that of Small, acid-soluble spore protein L (sspL) from Bacillus subtilis (strain 168).